The chain runs to 1486 residues: Chromosome partition protein MukB (1486 aa).

ATP is bound at residue 34-41; that stretch reads GGNGAGKS. 3 coiled-coil regions span residues 326–418, 444–480, and 509–603; these read LEAD…QYNQ, LETFQAKELEATEKMLSLEQKMSMAQTAHSQFEQAYQ, and RHLA…RAPV. The tract at residues 666–783 is flexible hinge; it reads PGGSEDQRLN…EVPLFGRAAR (118 aa). Coiled-coil stretches lie at residues 835–923, 977–1115, and 1209–1266; these read EAEI…AKLE, EMLS…TAKA, and VEAI…QNVS.

It belongs to the SMC family. MukB subfamily. In terms of assembly, homodimerization via its hinge domain. Binds to DNA via its C-terminal region. Interacts, and probably forms a ternary complex, with MukE and MukF via its C-terminal region. The complex formation is stimulated by calcium or magnesium. Interacts with tubulin-related protein FtsZ.

It localises to the cytoplasm. It is found in the nucleoid. Its function is as follows. Plays a central role in chromosome condensation, segregation and cell cycle progression. Functions as a homodimer, which is essential for chromosome partition. Involved in negative DNA supercoiling in vivo, and by this means organize and compact chromosomes. May achieve or facilitate chromosome segregation by condensation DNA from both sides of a centrally located replisome during cell division. In Escherichia coli O81 (strain ED1a), this protein is Chromosome partition protein MukB.